The chain runs to 454 residues: MAFQGPGRSLPGQLCAGVFGGLIQPPLGQKFYCPNGGSGGGGVPAVPSPLPQALSAPQCNGDGRGEPEPDRPIGYGAFGVVWSVTDPRDGKRVALKKMPNVFQNLVSCKRVFRELKMLCFFKHDNVLSALDILQPPQIDCFEEIYVITELMQTDLHKVIVSPQPLSSDHIKVFLYQILRGLKYLHSAGILHRDIKPGNLLVNSNCVLKICDFGLARVEELDESQHMTQEVVTQYYRAPEILMGSRHYRSAIDIWSVGCIFAELLGRRILFQAQSPIQQLDLITDLLGTPPLTAMRSACEGARAHILRGPHKPPSLSVLYMLSGEATHEAVHLLCRMLLFDPLKRISAKDALAHPYLEEGRLRYHTCMCHCCYSVSSGRVYTADFEPTATNRFDDSYEKSLTSVWQVKELVHRFITDQQQGKRPPLCINPHSAAFKTFIRSTAWHSSKVSKKEER.

Positions 67–356 constitute a Protein kinase domain; sequence PEPDRPIGYG…AKDALAHPYL (290 aa). Residues 73–81 and lysine 96 contribute to the ATP site; that span reads IGYGAFGVV. Aspartate 193 (proton acceptor) is an active-site residue.

It belongs to the protein kinase superfamily. CMGC Ser/Thr protein kinase family. MAP kinase subfamily. As to quaternary structure, interacts with sox11, hmgxb4/hmg2l1, rnf138/narf, stat3.1 and mef2a. Requires Mg(2+) as cofactor.

The protein localises to the nucleus. It is found in the cytoplasm. It catalyses the reaction L-seryl-[protein] + ATP = O-phospho-L-seryl-[protein] + ADP + H(+). It carries out the reaction L-threonyl-[protein] + ATP = O-phospho-L-threonyl-[protein] + ADP + H(+). Its activity is regulated as follows. Activated by tyrosine and threonine phosphorylation. Its function is as follows. Negatively regulates Wnt/beta-catenin-signaling during development. Plays a role together with sox11 in neural induction during early embryogenesis. Involved in TGFbeta-mediated mesoderm induction in early embryos, acting downstream of map3k7/tak1 to phosphorylate stat3. Augments the rnf138/narf-directed ubiquitination and degradation of tcf/lef by enhancing the association of rnf138/narf and tcf/lef. Phosphorylates mef2a to play a role in anterior neural development, including eye formation. This Xenopus tropicalis (Western clawed frog) protein is Serine/threonine-protein kinase NLK2 (nlk.2).